A 244-amino-acid chain; its full sequence is Phosphoadenosine 5'-phosphosulfate reductase (244 aa).

The active-site Nucleophile; cysteine thiosulfonate intermediate is the Cys-239.

This sequence belongs to the PAPS reductase family. CysH subfamily.

The protein localises to the cytoplasm. The catalysed reaction is [thioredoxin]-disulfide + sulfite + adenosine 3',5'-bisphosphate + 2 H(+) = [thioredoxin]-dithiol + 3'-phosphoadenylyl sulfate. It functions in the pathway sulfur metabolism; hydrogen sulfide biosynthesis; sulfite from sulfate: step 3/3. Its function is as follows. Catalyzes the formation of sulfite from phosphoadenosine 5'-phosphosulfate (PAPS) using thioredoxin as an electron donor. In Salmonella arizonae (strain ATCC BAA-731 / CDC346-86 / RSK2980), this protein is Phosphoadenosine 5'-phosphosulfate reductase.